Reading from the N-terminus, the 98-residue chain is Large ribosomal subunit protein uL23 (98 aa).

This sequence belongs to the universal ribosomal protein uL23 family. In terms of assembly, part of the 50S ribosomal subunit. Contacts protein L29, and trigger factor when it is bound to the ribosome.

Its function is as follows. One of the early assembly proteins it binds 23S rRNA. One of the proteins that surrounds the polypeptide exit tunnel on the outside of the ribosome. Forms the main docking site for trigger factor binding to the ribosome. This Methylobacterium radiotolerans (strain ATCC 27329 / DSM 1819 / JCM 2831 / NBRC 15690 / NCIMB 10815 / 0-1) protein is Large ribosomal subunit protein uL23.